The sequence spans 299 residues: Protein N-terminal and lysine N-methyltransferase EFM7 (299 aa).

Residues tryptophan 74, 100-102 (GAG), aspartate 122, tryptophan 155, and serine 178 contribute to the S-adenosyl-L-methionine site.

This sequence belongs to the class I-like SAM-binding methyltransferase superfamily. EFM7 family.

The protein resides in the cytoplasm. Its function is as follows. S-adenosyl-L-methionine-dependent protein methyltransferase that trimethylates the N-terminal glycine 'Gly-2' of elongation factor 1-alpha, before also catalyzing the mono- and dimethylation of 'Lys-3'. This is Protein N-terminal and lysine N-methyltransferase EFM7 from Cryptococcus neoformans var. neoformans serotype D (strain B-3501A) (Filobasidiella neoformans).